Here is a 143-residue protein sequence, read N- to C-terminus: Ribosome maturation factor RimP (143 aa).

This sequence belongs to the RimP family.

The protein localises to the cytoplasm. Its function is as follows. Required for maturation of 30S ribosomal subunits. The sequence is that of Ribosome maturation factor RimP from Borrelia recurrentis (strain A1).